The chain runs to 463 residues: Chromosomal replication initiator protein DnaA (463 aa).

A domain I, interacts with DnaA modulators region spans residues 1–83; that stretch reads MSTNQIILTD…LQLFQHYNNT (83 aa). Positions 83 to 124 are domain II; the sequence is TIKSVEIITKELPGTSKTVIELPTKTFADIGSSELNAENIFS. Residues 125–343 form a domain III, AAA+ region region; the sequence is TLDVRFTFDN…GALNKVIAHS (219 aa). ATP contacts are provided by glycine 171, glycine 173, lysine 174, and threonine 175. The interval 344–463 is domain IV, binds dsDNA; sequence NFTLKEITLE…INLLMKILQN (120 aa).

The protein belongs to the DnaA family. As to quaternary structure, oligomerizes as a right-handed, spiral filament on DNA at oriC.

The protein localises to the cytoplasm. Its function is as follows. Plays an essential role in the initiation and regulation of chromosomal replication. ATP-DnaA binds to the origin of replication (oriC) to initiate formation of the DNA replication initiation complex once per cell cycle. Binds the DnaA box (a 9 base pair repeat at the origin) and separates the double-stranded (ds)DNA. Forms a right-handed helical filament on oriC DNA; dsDNA binds to the exterior of the filament while single-stranded (ss)DNA is stabiized in the filament's interior. The ATP-DnaA-oriC complex binds and stabilizes one strand of the AT-rich DNA unwinding element (DUE), permitting loading of DNA polymerase. After initiation quickly degrades to an ADP-DnaA complex that is not apt for DNA replication. Binds acidic phospholipids. This is Chromosomal replication initiator protein DnaA from Rickettsia canadensis (strain McKiel).